Consider the following 884-residue polypeptide: Coatomer subunit gamma-1 (884 aa).

5 HEAT repeats span residues 65–100 (VEATEVFFAVTKLFQSKDAGLRRLVYLMIKELSPSS), 101–138 (DEVIIVTSSLMKDMNSKTDMYRANAIRVLCRIIDGTLL), 286–323 (RELAPAITVLQLFLSSSKPVLRFAAVRTLNKVAMTRPL), 325–357 (VTNCNVDLESLMSDQNRSIATLAITTLLKTGNE), and 358–395 (SSVDRLMKQITNFMSDIADEFKIVVVEAIRSLCLKFPL). The interval 592–612 (QPLQEKKAPGKKPPAGAPAPA) is disordered. The segment covering 602–612 (KKPPAGAPAPA) has biased composition (pro residues).

This sequence belongs to the COPG family. Oligomeric complex that consists of at least the alpha, beta, beta', gamma, delta, epsilon and zeta subunits.

It localises to the cytoplasm. Its subcellular location is the golgi apparatus membrane. It is found in the cytoplasmic vesicle. The protein localises to the COPI-coated vesicle membrane. The coatomer is a cytosolic protein complex that binds to dilysine motifs and reversibly associates with Golgi non-clathrin-coated vesicles, which further mediate biosynthetic protein transport from the ER, via the Golgi up to the trans Golgi network. Coatomer complex is required for budding from Golgi membranes, and is essential for the retrograde Golgi-to-ER transport of dilysine-tagged proteins. In Oryza sativa subsp. japonica (Rice), this protein is Coatomer subunit gamma-1.